Consider the following 743-residue polypeptide: Polyribonucleotide nucleotidyltransferase (743 aa).

Mg(2+) is bound by residues Asp-489 and Asp-495. A KH domain is found at 556–618 (PRIEKMHIGK…PCIDAAIGMI (63 aa)). Residues 628–698 (GETYPGKITS…KTGKFKLSRK (71 aa)) enclose the S1 motif domain. Positions 704–743 (PEGYVEPQPRERRERREGGREGGRNFERRGGDRDHREPRG) are disordered.

It belongs to the polyribonucleotide nucleotidyltransferase family. The cofactor is Mg(2+).

The protein localises to the cytoplasm. The catalysed reaction is RNA(n+1) + phosphate = RNA(n) + a ribonucleoside 5'-diphosphate. Its function is as follows. Involved in mRNA degradation. Catalyzes the phosphorolysis of single-stranded polyribonucleotides processively in the 3'- to 5'-direction. The chain is Polyribonucleotide nucleotidyltransferase from Porphyromonas gingivalis (strain ATCC BAA-308 / W83).